The primary structure comprises 285 residues: 2-dehydro-3-deoxyphosphooctonate aldolase (285 aa).

The protein belongs to the KdsA family.

It is found in the cytoplasm. It carries out the reaction D-arabinose 5-phosphate + phosphoenolpyruvate + H2O = 3-deoxy-alpha-D-manno-2-octulosonate-8-phosphate + phosphate. The protein operates within carbohydrate biosynthesis; 3-deoxy-D-manno-octulosonate biosynthesis; 3-deoxy-D-manno-octulosonate from D-ribulose 5-phosphate: step 2/3. It functions in the pathway bacterial outer membrane biogenesis; lipopolysaccharide biosynthesis. The protein is 2-dehydro-3-deoxyphosphooctonate aldolase of Verminephrobacter eiseniae (strain EF01-2).